The sequence spans 358 residues: Hsp70/Hsp90 co-chaperone cns1 (358 aa).

TPR repeat units follow at residues 64–97 (AQNF…KCGD), 102–135 (IACY…DSTH), 136–169 (AKAY…HPND), and 221–255 (TEHP…YPLV).

Belongs to the TTC4 family. In terms of assembly, monomer. Component of Hsp70 and Hsp90 chaperone complexes.

It localises to the cytoplasm. Its subcellular location is the nucleus. Functionally, co-chaperone that binds to the molecular chaperones Hsp90 and Hsp70. Stimulates Hsp70 ATPase activity, but not Hsp90 ATPase activity. Involved in only a subset of Hsp90 functions. The polypeptide is Hsp70/Hsp90 co-chaperone cns1 (cns1) (Schizosaccharomyces pombe (strain 972 / ATCC 24843) (Fission yeast)).